The following is a 628-amino-acid chain: Kinesin-like protein KIN-10B (628 aa).

Positions 20 to 340 constitute a Kinesin motor domain; it reads NVRVVLRVRP…VSLAARSRHI (321 aa). 114–121 lines the ATP pocket; it reads GATGSGKT. Residues 496–519 are disordered; the sequence is SPIDSNAKPNSAHGSSPFLKPMTP. A compositionally biased stretch (polar residues) spans 498 to 509; sequence IDSNAKPNSAHG.

Belongs to the TRAFAC class myosin-kinesin ATPase superfamily. Kinesin family. KIN-10 subfamily.

This Arabidopsis thaliana (Mouse-ear cress) protein is Kinesin-like protein KIN-10B.